We begin with the raw amino-acid sequence, 141 residues long: Putative pre-16S rRNA nuclease (141 aa).

Belongs to the YqgF nuclease family.

The protein resides in the cytoplasm. Functionally, could be a nuclease involved in processing of the 5'-end of pre-16S rRNA. The sequence is that of Putative pre-16S rRNA nuclease from Cupriavidus pinatubonensis (strain JMP 134 / LMG 1197) (Cupriavidus necator (strain JMP 134)).